The sequence spans 677 residues: Probable serine/threonine-protein kinase mkcF (677 aa).

Residues 1-58 (MLYLVATGDYKGPSENHLSFTKGQRIEFLERTENGFIKGKLDGKVGIFPSSLITIETR) form the SH3 domain. Residues 72 to 244 (TETKDDTGSI…SSSSSSTKRR (173 aa)) are disordered. Positions 79 to 94 (GSISSSTSTSTSSLTT) are enriched in low complexity. Over residues 105 to 126 (GEQQPSTSTINGQSSSTSPILQ) the composition is skewed to polar residues. Positions 127–146 (SNGTTNTTTSSTSNNNIGDN) are enriched in low complexity. Over residues 158 to 174 (TTSNHSKSASRLSVASF) the composition is skewed to polar residues. Low complexity predominate over residues 175-192 (STTTTATTTTTTTTTATS). Positions 209–224 (DKKSKDDDKSEKEGLY) are enriched in basic and acidic residues. Positions 230–240 (SSSSSSSSSSS) are enriched in low complexity. The 246-residue stretch at 401–646 (IKFTHMVGRG…VDKLMRHPFF (246 aa)) folds into the Protein kinase domain. Residues 407–415 (VGRGQYGKV) and Lys-428 contribute to the ATP site. The active-site Proton acceptor is Asp-519.

It belongs to the protein kinase superfamily. Ser/Thr protein kinase family. STE20 subfamily. The cofactor is Mg(2+).

The enzyme catalyses L-seryl-[protein] + ATP = O-phospho-L-seryl-[protein] + ADP + H(+). It carries out the reaction L-threonyl-[protein] + ATP = O-phospho-L-threonyl-[protein] + ADP + H(+). The chain is Probable serine/threonine-protein kinase mkcF from Dictyostelium discoideum (Social amoeba).